The chain runs to 165 residues: Phosphopantetheine adenylyltransferase (165 aa).

Serine 10 lines the substrate pocket. ATP-binding positions include 10–11 (SF) and histidine 18. Residues lysine 42, leucine 74, and arginine 88 each coordinate substrate. Residues 89-91 (GLR), glutamate 99, and 124-130 (YSYLSSS) contribute to the ATP site.

The protein belongs to the bacterial CoaD family. Homohexamer. Requires Mg(2+) as cofactor.

The protein resides in the cytoplasm. It catalyses the reaction (R)-4'-phosphopantetheine + ATP + H(+) = 3'-dephospho-CoA + diphosphate. Its pathway is cofactor biosynthesis; coenzyme A biosynthesis; CoA from (R)-pantothenate: step 4/5. Functionally, reversibly transfers an adenylyl group from ATP to 4'-phosphopantetheine, yielding dephospho-CoA (dPCoA) and pyrophosphate. This chain is Phosphopantetheine adenylyltransferase, found in Halalkalibacterium halodurans (strain ATCC BAA-125 / DSM 18197 / FERM 7344 / JCM 9153 / C-125) (Bacillus halodurans).